A 346-amino-acid polypeptide reads, in one-letter code: fMet-Leu-Phe receptor (346 aa).

N-linked (GlcNAc...) asparagine glycosylation is found at Asn1 and Asn7. The Extracellular segment spans residues 1-24 (NSSLPTNISGGTPAVSAGYLFLDI). Residues 25–47 (ITYLVFAVTFVLGVLGNGLVIWV) form a helical membrane-spanning segment. At 48–58 (AGFRMTHTVTT) the chain is on the cytoplasmic side. A helical membrane pass occupies residues 59 to 80 (ISYLNLAVADFCFTSTLPFFMV). Residues 81–97 (RKAMGGHWPFGWFLCKF) lie on the Extracellular side of the membrane. Cys95 and Cys173 form a disulfide bridge. A helical membrane pass occupies residues 98–118 (IFTIVDINLFGSVFLIALIAL). Residues 119–137 (DRCVCVLHPVWTQNHRTVS) lie on the Cytoplasmic side of the membrane. The chain crosses the membrane as a helical span at residues 138 to 159 (LAKKVIIGPWVMALLLTLPVII). Residues 160–202 (RVTTVPGKTGTVACTFNFSPWTNDPKERINVAIAMLTVRGIIR) lie on the Extracellular side of the membrane. The helical transmembrane segment at 203–223 (FIIGFSAPMSIVAVSYGLIAT) threads the bilayer. At 224–239 (KIHKQGLIKFSRPLRV) the chain is on the cytoplasmic side. Residues 240-263 (LSFVAAAFFLCWSPYQVVALIATV) form a helical membrane-spanning segment. At 264 to 282 (RIRELLQGMYKEIGIAVDV) the chain is on the extracellular side. Residues 283–302 (TSALAFFNSCLNPMLYVFMG) traverse the membrane as a helical segment. The Cytoplasmic portion of the chain corresponds to 303–346 (QDFRERLIHALPASLERALTEDSTQTSDTATNSTLPSAEVALQA). The tract at residues 322–346 (TEDSTQTSDTATNSTLPSAEVALQA) is disordered. Polar residues predominate over residues 323–338 (EDSTQTSDTATNSTLP).

The protein belongs to the G-protein coupled receptor 1 family. Phosphorylated; which is necessary for desensitization.

Its subcellular location is the cell membrane. In terms of biological role, high affinity receptor for N-formyl-methionyl peptides (fMLP), which are powerful neutrophil chemotactic factors. Binding of fMLP to the receptor stimulates intracellular calcium mobilization and superoxide anion release. This response is mediated via a G-protein that activates a phosphatidylinositol-calcium second messenger system. Receptor for TAFA4, mediates its effects on chemoattracting macrophages, promoting phagocytosis and increasing ROS release. Receptor for cathepsin CTSG, leading to increased phagocyte chemotaxis. This Pan troglodytes (Chimpanzee) protein is fMet-Leu-Phe receptor (FPR1).